A 179-amino-acid polypeptide reads, in one-letter code: Ribosome maturation factor RimM (179 aa).

The PRC barrel domain maps to 95 to 174; it reads KDEFFYFDIL…QIFCTQDAFL (80 aa).

This sequence belongs to the RimM family. In terms of assembly, binds ribosomal protein uS19.

The protein resides in the cytoplasm. In terms of biological role, an accessory protein needed during the final step in the assembly of 30S ribosomal subunit, possibly for assembly of the head region. Essential for efficient processing of 16S rRNA. May be needed both before and after RbfA during the maturation of 16S rRNA. It has affinity for free ribosomal 30S subunits but not for 70S ribosomes. The protein is Ribosome maturation factor RimM of Campylobacter jejuni subsp. jejuni serotype O:6 (strain 81116 / NCTC 11828).